The primary structure comprises 563 residues: MRKRRTLTAPSHFNSMSAALNPMKMAAMQSQPTVDDSWAASISRIMSLTAGDRHKFSSQPFANRLDAILEAVVPSRKDPTHEKVLTIVNALIENGAIRRDEGAGVYDALLHRVSKYNSINTQSNLERLAGDVREAVAQQVRIAAGNLGSLTALNSFLARLPANVERGQDNYTGFLSALKLLVSEVPNTEVYQSGPHYFLQSSRNGTQTVNLTNAFENLKPLWGVKAPTMERLSISALLTPNTRLLLLLVSPFTDSVSISRDSYLGYLLTLYREALGRNHLDERTLEEVTEVSKAMGNENINNLQATLNFLLTNRQKKIPKDYSLTPEEERIVRFIQQAVSLRMMQENLSPTEALDVTAANMEPSFYANNRDFINKLMDYFHRAAAIAPDYFLGAVMNPRWLPPEGFFTGVFDFPERDNYIWDGLDSSLDLTRQDAMRFLEEKFIDDDQRTESRSVSRVPTPASSRRSSVAMASDSLIRPMNNDKNSLREIEVLADKLARWKTYKRESEEARESLPVIVRPKKYSSAISSDESDDGMSKPDKFLKFEGSGNPFAHLRPKLGRCL.

Positions 1 to 117 are peripentonal hexon-tethering domain; the sequence is MRKRRTLTAP…ALLHRVSKYN (117 aa). Positions 148-261 are binding to hexon-linking protein; that stretch reads GSLTALNSFL…FTDSVSISRD (114 aa). Position 235 is a phosphoserine; by host (Ser235). Phosphothreonine; by host is present on Thr284. A disordered region spans residues 449–471; sequence RTESRSVSRVPTPASSRRSSVAM. Residues Ser452 and Ser456 each carry the phosphoserine; by host modification. Positions 462–471 are enriched in low complexity; it reads ASSRRSSVAM. Phosphoserine; by host occurs at positions 475 and 486. Residues 524 to 543 form a disordered region; that stretch reads SSAISSDESDDGMSKPDKFL. Residues 549–563 constitute a propeptide that is removed on maturation; that stretch reads GNPFAHLRPKLGRCL.

It belongs to the adenoviridae hexon-linking protein IIIa family. Interacts with hexon proteins; this interaction tethers the peripentonal hexons to hexons situated in the facet. Interacts with the penton protein (via N-terminus). Interacts with packaging protein 3; this interaction is required to promote correct genome packaging. In terms of processing, cleaved near the C-terminus by the viral protease during virion maturation to form the mature protein.

It is found in the virion. Its subcellular location is the host nucleus. Its function is as follows. Structural component of the virion that acts as a cement protein on the capsid exterior which mediates the interactions between the hexons, including the peripentonal hexons, and reaches all the way to the penton vertices. Two hexon linking proteins IIIa, one from each facet, stabilize the unique edge interface between a pair of facets. As the virus enters the host cell, hexon linking proteins IIIa are shed concomitant with virion acidification in the endosome. During virus assembly, seems to play a role in the serotype specificity of the packaging of viral DNA via its interaction with packaging protein 3. The polypeptide is Pre-hexon-linking protein IIIa (Canis lupus familiaris (Dog)).